We begin with the raw amino-acid sequence, 671 residues long: Kinesin-like protein KIF2C (671 aa).

The tract at residues Met-1 to Ile-200 is globular. The tract at residues Gln-37–Thr-58 is disordered. Residue Ser-41 is modified to Phosphoserine; by AURKB. The short motif at Ser-44–Pro-47 is the Microtubule tip localization signal element. Phosphoserine occurs at positions 55, 57, 61, 112, 121, 133, and 138. Positions Ala-115–Ser-138 are disordered. A compositionally biased stretch (polar residues) spans Ser-121–Asn-132. A negative regulator of microtubule-binding region spans residues Glu-153 to Glu-184. The Kinesin motor domain occupies Arg-204 to Leu-534. Residues Arg-210 and Gly-294–Thr-301 each bind ATP. The residue at position 465 (Ser-465) is a Phosphoserine. The segment at Glu-533–Glu-568 is disordered. Residues Glu-566 to Gln-601 adopt a coiled-coil conformation. Phosphoserine is present on Ser-576.

Belongs to the TRAFAC class myosin-kinesin ATPase superfamily. Kinesin family. MCAK/KIF2 subfamily. Interacts with CENPH. Interacts with MTUS2/TIP150; the interaction is direct. Interacts with MAPRE1; the interaction is direct, regulated by phosphorylation and is probably required for targeting to growing microtubule plus ends. Interacts with KIF18B at microtubule tips; this interaction increases the affinity of both partners for microtubule plus ends and is required for robust microtubule depolymerization. Phosphorylation by AURKA or AURKB strongly reduces KIF18B-binding. Post-translationally, phosphorylation by AURKB, regulates association with centromeres and kinetochores and the microtubule depolymerization activity. Ubiquitinated. Testis. Localized to the meiotically active cells of the seminiferous epithelia in the testis.

The protein localises to the cytoplasm. Its subcellular location is the cytoskeleton. The protein resides in the nucleus. It is found in the chromosome. It localises to the centromere. The protein localises to the kinetochore. In terms of biological role, in complex with KIF18B, constitutes the major microtubule plus-end depolymerizing activity in mitotic cells. Regulates the turnover of microtubules at the kinetochore and functions in chromosome segregation during mitosis. Plays a role in chromosome congression and is required for the lateral to end-on conversion of the chromosome-microtubule attachment. This is Kinesin-like protein KIF2C (Kif2c) from Rattus norvegicus (Rat).